A 343-amino-acid polypeptide reads, in one-letter code: UBP1-associated proteins 1A (343 aa).

The segment at Met-1 to Glu-61 is disordered. Over residues Asn-28–Ser-49 the composition is skewed to low complexity. Acidic residues predominate over residues Ser-50–Glu-61. The 78-residue stretch at Arg-104–Met-181 folds into the RRM domain. The interval Ser-312 to Ser-343 is disordered. Basic and acidic residues predominate over residues Ala-319 to Asp-330.

As to quaternary structure, interacts with UBA1A, UBA2A, UBP1A, UBP1B and UBP1C.

It localises to the nucleus. Its function is as follows. Acts as a component of a complex regulating the turnover of mRNAs in the nucleus. Binds with high affinity to RNA molecules that contain U-rich sequences in 3'-UTRs. May function in complex with UBP1 and contribute to the stabilization of mRNAs in the nucleus. However, unlike UBP1, UBA1A does not stimulate pre-mRNA splicing. This Arabidopsis thaliana (Mouse-ear cress) protein is UBP1-associated proteins 1A (UBA1A).